The chain runs to 121 residues: Ribonuclease P protein component (121 aa).

Belongs to the RnpA family. In terms of assembly, consists of a catalytic RNA component (M1 or rnpB) and a protein subunit.

It catalyses the reaction Endonucleolytic cleavage of RNA, removing 5'-extranucleotides from tRNA precursor.. Functionally, RNaseP catalyzes the removal of the 5'-leader sequence from pre-tRNA to produce the mature 5'-terminus. It can also cleave other RNA substrates such as 4.5S RNA. The protein component plays an auxiliary but essential role in vivo by binding to the 5'-leader sequence and broadening the substrate specificity of the ribozyme. This is Ribonuclease P protein component from Bifidobacterium adolescentis (strain ATCC 15703 / DSM 20083 / NCTC 11814 / E194a).